We begin with the raw amino-acid sequence, 51 residues long: Large ribosomal subunit protein eL39 (51 aa).

Belongs to the eukaryotic ribosomal protein eL39 family. Interacts with IMPACT.

The protein is Large ribosomal subunit protein eL39 (RPL39) of Gallus gallus (Chicken).